The sequence spans 223 residues: Cytidylate kinase (223 aa).

Position 10–18 (10–18 (GPAGAGKST)) interacts with ATP.

Belongs to the cytidylate kinase family. Type 1 subfamily.

It is found in the cytoplasm. It catalyses the reaction CMP + ATP = CDP + ADP. It carries out the reaction dCMP + ATP = dCDP + ADP. This chain is Cytidylate kinase, found in Exiguobacterium sibiricum (strain DSM 17290 / CCUG 55495 / CIP 109462 / JCM 13490 / 255-15).